We begin with the raw amino-acid sequence, 472 residues long: Methanethiol oxidase (472 aa).

Ala-2 is modified (N-acetylalanine). Phosphoserine is present on residues Ser-111 and Ser-467.

It belongs to the selenium-binding protein family. Interacts with USP33. Post-translationally, the N-terminus is blocked. Highly expressed in liver, kidney and, to a lesser extent, lung.

Its subcellular location is the nucleus. The protein localises to the cytoplasm. The protein resides in the cytosol. It localises to the membrane. The catalysed reaction is methanethiol + O2 + H2O = hydrogen sulfide + formaldehyde + H2O2 + H(+). It functions in the pathway organosulfur degradation. Its function is as follows. Catalyzes the oxidation of methanethiol, an organosulfur compound known to be produced in substantial amounts by gut bacteria. Selenium-binding protein which may be involved in the sensing of reactive xenobiotics in the cytoplasm. May be involved in intra-Golgi protein transport. This is Methanethiol oxidase (Selenbp1) from Mus musculus (Mouse).